The chain runs to 316 residues: Acetaldehyde dehydrogenase 3 (316 aa).

An NAD(+)-binding site is contributed by 12–15; sequence SGNI. Cys-132 functions as the Acyl-thioester intermediate in the catalytic mechanism. Residues 163 to 171 and Asn-289 contribute to the NAD(+) site; that span reads SAGPGTRAN.

Belongs to the acetaldehyde dehydrogenase family.

It catalyses the reaction acetaldehyde + NAD(+) + CoA = acetyl-CoA + NADH + H(+). The protein is Acetaldehyde dehydrogenase 3 (mhpF) of Comamonas testosteroni (Pseudomonas testosteroni).